A 491-amino-acid polypeptide reads, in one-letter code: Delayed-rectifier potassium channel regulatory subunit KCNS3 (491 aa).

Residues 1-182 lie on the Cytoplasmic side of the membrane; it reads MVFGEFFHRP…IRMENPAYCL (182 aa). A helical membrane pass occupies residues 183-204; sequence SAKLIAISSLSVVLASIVAMCV. Residues 205-220 lie on the Extracellular side of the membrane; the sequence is HSMSEFQNEDGEVDDP. A helical membrane pass occupies residues 221–243; it reads VLEGVEIACIAWFTGELAIRLVA. Over 244–254 the chain is Cytoplasmic; it reads APSQKKFWKNP. A helical membrane pass occupies residues 255 to 275; sequence LNIIDFVSIIPFYATLAVDTK. The Extracellular segment spans residues 276–285; the sequence is EEESEDIENM. A helical; Voltage-sensor transmembrane segment spans residues 286–306; that stretch reads GKVVQILRLMRIFRILKLARH. At 307 to 321 the chain is on the cytoplasmic side; it reads SVGLRSLGATLRHSY. The helical transmembrane segment at 322 to 343 threads the bilayer; sequence HEVGLLLLFLSVGISIFSVLIY. Residues 344 to 357 lie on the Extracellular side of the membrane; the sequence is SVEKDEHKSSLTSI. An intramembrane region (helical) is located at residues 358-369; that stretch reads PICWWWATISMT. Residues 370 to 375 carry the Selectivity filter motif; that stretch reads TVGYGD. An intramembrane segment occupies 370–377; it reads TVGYGDTH. The Extracellular portion of the chain corresponds to 378 to 384; that stretch reads PVTLAGK. The helical transmembrane segment at 385–413 threads the bilayer; the sequence is IIASTCIICGILVVALPITIIFNKFSKYY. The Cytoplasmic segment spans residues 414–491; the sequence is QKQKDMEVDQ…TASLENCTGK (78 aa).

This sequence belongs to the potassium channel family. S (TC 1.A.1.2) subfamily. Kv9.3/KCNS3 sub-subfamily. Heterotetramer with KCNB1. Does not form homomultimers.

Its subcellular location is the cell membrane. Functionally, potassium channel regulatory subunit that modulates the delayed rectifier potassium channel activity of KCNB1 by namely slowing down the deactivation and inactivation time constants. While it does not form functional channel on its own, it can form functional heterotetrameric channels with KCNB1. The chain is Delayed-rectifier potassium channel regulatory subunit KCNS3 from Mus musculus (Mouse).